The following is a 151-amino-acid chain: Transcriptional regulator MraZ (151 aa).

SpoVT-AbrB domains lie at 5-51 (AHEL…PVAE) and 81-124 (AEIL…GREQ).

It belongs to the MraZ family. Forms oligomers.

Its subcellular location is the cytoplasm. The protein localises to the nucleoid. This is Transcriptional regulator MraZ from Neisseria meningitidis serogroup A / serotype 4A (strain DSM 15465 / Z2491).